The primary structure comprises 196 residues: DNA polymerase epsilon subunit D (196 aa).

The tract at residues 125–196 (RKKEKLDSGE…ETRVQNLEQT (72 aa)) is disordered. Residues 133–143 (GEVDADGDIDM) show a composition bias toward acidic residues. Positions 144-159 (GEDKENVPVEKVKEHD) are enriched in basic and acidic residues. The span at 160–173 (EIEEQGDALQDVEE) shows a compositional bias: acidic residues. A compositionally biased stretch (basic and acidic residues) spans 174-188 (SSEKKQKTESQDVET). A Phosphoserine; by ATM or ATR modification is found at Ser-183.

DNA polymerase epsilon is a heterotetramer consisting of POL2, DPB2, DPB3 and DPB4. Component of the ISW2 complex, which at least consists of ISW2, ITC1, DLS1 and DPB4.

The protein resides in the nucleus. Functionally, as accessory component of the DNA polymerase epsilon (DNA polymerase II) participates in chromosomal DNA replication. It is required during synthesis of the leading and lagging DNA strands at the replication fork and binds at/or near replication origins and moves along DNA with the replication fork. It has 3'-5' proofreading exonuclease activity that correct errors arising during DNA replication. It is also involved in DNA synthesis during DNA repair. Also functions as a component of the ISW2 complex, which acts in remodeling the chromatin by catalyzing an ATP-dependent alteration in the structure of nucleosomal DNA. The ISW2 complex is involved in coordinating transcriptional repression and in inheritance of telomeric silencing. It is involved in repression of MAT a-specific genes, INO1, and early meiotic genes during mitotic growth dependent upon transcription factor UME6 and in a parallel pathway to the RPD3-SIN3 histone deacetylase complex. This Saccharomyces cerevisiae (strain ATCC 204508 / S288c) (Baker's yeast) protein is DNA polymerase epsilon subunit D (DPB4).